The sequence spans 589 residues: Phenylalanine--tRNA ligase beta subunit (589 aa).

One can recognise a B5 domain in the interval leucine 302 to methionine 379. Residues aspartate 357, aspartate 363, glutamate 366, and aspartate 367 each coordinate Mg(2+).

This sequence belongs to the phenylalanyl-tRNA synthetase beta subunit family. Type 2 subfamily. As to quaternary structure, heterotetramer; dimer of two heterodimers formed by FARSA and FARSB. Mg(2+) is required as a cofactor.

It localises to the cytoplasm. The catalysed reaction is tRNA(Phe) + L-phenylalanine + ATP = L-phenylalanyl-tRNA(Phe) + AMP + diphosphate + H(+). This is Phenylalanine--tRNA ligase beta subunit (Farsb) from Mus musculus (Mouse).